Here is a 132-residue protein sequence, read N- to C-terminus: uncharacterized protein (132 aa).

Residues 1–69 enclose the HTH merR-type domain; that stretch reads MNIGEAAKKS…LDEVGKLLTL (69 aa). Residues 4–23 constitute a DNA-binding region (H-T-H motif); it reads GEAAKKSGLTPKMIRYYESI.

It is found in the cytoplasm. This is an uncharacterized protein from Pseudomonas aeruginosa (strain ATCC 15692 / DSM 22644 / CIP 104116 / JCM 14847 / LMG 12228 / 1C / PRS 101 / PAO1).